We begin with the raw amino-acid sequence, 237 residues long: Phosphoribosylaminoimidazole-succinocarboxamide synthase (237 aa).

This sequence belongs to the SAICAR synthetase family.

The catalysed reaction is 5-amino-1-(5-phospho-D-ribosyl)imidazole-4-carboxylate + L-aspartate + ATP = (2S)-2-[5-amino-1-(5-phospho-beta-D-ribosyl)imidazole-4-carboxamido]succinate + ADP + phosphate + 2 H(+). The protein operates within purine metabolism; IMP biosynthesis via de novo pathway; 5-amino-1-(5-phospho-D-ribosyl)imidazole-4-carboxamide from 5-amino-1-(5-phospho-D-ribosyl)imidazole-4-carboxylate: step 1/2. The polypeptide is Phosphoribosylaminoimidazole-succinocarboxamide synthase (Klebsiella pneumoniae (strain 342)).